Here is a 265-residue protein sequence, read N- to C-terminus: 4-diphosphocytidyl-2-C-methyl-D-erythritol kinase (265 aa).

Lys-8 is an active-site residue. Pro-95–Ser-105 contributes to the ATP binding site. Asp-135 is a catalytic residue.

The protein belongs to the GHMP kinase family. IspE subfamily.

The enzyme catalyses 4-CDP-2-C-methyl-D-erythritol + ATP = 4-CDP-2-C-methyl-D-erythritol 2-phosphate + ADP + H(+). The protein operates within isoprenoid biosynthesis; isopentenyl diphosphate biosynthesis via DXP pathway; isopentenyl diphosphate from 1-deoxy-D-xylulose 5-phosphate: step 3/6. In terms of biological role, catalyzes the phosphorylation of the position 2 hydroxy group of 4-diphosphocytidyl-2C-methyl-D-erythritol. This Ureaplasma urealyticum serovar 10 (strain ATCC 33699 / Western) protein is 4-diphosphocytidyl-2-C-methyl-D-erythritol kinase.